A 288-amino-acid chain; its full sequence is ATP synthase gamma chain (288 aa).

This sequence belongs to the ATPase gamma chain family. As to quaternary structure, F-type ATPases have 2 components, CF(1) - the catalytic core - and CF(0) - the membrane proton channel. CF(1) has five subunits: alpha(3), beta(3), gamma(1), delta(1), epsilon(1). CF(0) has three main subunits: a, b and c.

The protein localises to the cell inner membrane. Functionally, produces ATP from ADP in the presence of a proton gradient across the membrane. The gamma chain is believed to be important in regulating ATPase activity and the flow of protons through the CF(0) complex. The protein is ATP synthase gamma chain of Paracidovorax citrulli (strain AAC00-1) (Acidovorax citrulli).